The sequence spans 501 residues: Cytochrome P450 monooxygenase notH (501 aa).

The chain crosses the membrane as a helical span at residues Leu-11–Phe-31. Asn-298 carries N-linked (GlcNAc...) asparagine glycosylation. Cys-442 contributes to the heme binding site.

It belongs to the cytochrome P450 family. The cofactor is heme.

It localises to the membrane. It functions in the pathway alkaloid biosynthesis. Cytochrome P450 monooxygenase; part of the gene cluster that mediates the biosynthesis of notoamide, a fungal indole alkaloid that belongs to a family of natural products containing a characteristic bicyclo[2.2.2]diazaoctane core. The first step of notoamide biosynthesis involves coupling of L-proline and L-tryptophan by the bimodular NRPS notE, to produce cyclo-L-tryptophan-L-proline called brevianamide F. The reverse prenyltransferase notF then acts as a deoxybrevianamide E synthase and converts brevianamide F to deoxybrevianamide E via reverse prenylation at C-2 of the indole ring leading to the bicyclo[2.2.2]diazaoctane core. Deoxybrevianamide E is further hydroxylated at C-6 of the indole ring, likely catalyzed by the cytochrome P450 monooxygenase notG, to yield 6-hydroxy-deoxybrevianamide E. 6-hydroxy-deoxybrevianamide E is a specific substrate of the prenyltransferase notC for normal prenylation at C-7 to produce 6-hydroxy-7-prenyl-deoxybrevianamide, also called notoamide S. As the proposed pivotal branching point in notoamide biosynthesis, notoamide S can be diverted to notoamide E through an oxidative pyran ring closure putatively catalyzed by either notH cytochrome P450 monooxygenase or the notD FAD-linked oxidoreductase. This step would be followed by an indole 2,3-epoxidation-initiated pinacol-like rearrangement catalyzed by the notB FAD-dependent monooxygenase leading to the formation of notoamide C and notoamide D. On the other hand notoamide S is converted to notoamide T by notH (or notD), a bifunctional oxidase that also functions as the intramolecular Diels-Alderase responsible for generation of (+)-notoamide T. To generate antipodal (-)-notoaminide T, notH' (or notD') in Aspergillus versicolor is expected to catalyze a Diels-Alder reaction leading to the opposite stereochemistry. The remaining oxidoreductase notD (or notH) likely catalyzes the oxidative pyran ring formation to yield (+)-stephacidin A. The FAD-dependent monooxygenase notI is highly similar to notB and is predicted to catalyze a similar conversion from (+)-stephacidin A to (-)-notoamide B via the 2,3-epoxidation of (+)-stephacidin A followed by a pinacol-type rearrangement. Finally, it remains unclear which enzyme could be responsible for the final hydroxylation steps leading to notoamide A and sclerotiamide. The polypeptide is Cytochrome P450 monooxygenase notH (Aspergillus sp. (strain MF297-2)).